We begin with the raw amino-acid sequence, 77 residues long: Defensin-like protein 4 (77 aa).

The N-terminal stretch at 1–30 is a signal peptide; sequence MKFSMRLISAVLFLVMIFVATGMGPVTVEA. Cystine bridges form between cysteine 33/cysteine 77, cysteine 44/cysteine 64, cysteine 50/cysteine 71, and cysteine 54/cysteine 73.

This sequence belongs to the DEFL family. As to expression, expressed in roots, siliques and seeds.

The protein resides in the secreted. Functionally, confers broad-spectrum resistance to pathogens. The polypeptide is Defensin-like protein 4 (PDF2.1) (Arabidopsis thaliana (Mouse-ear cress)).